The sequence spans 421 residues: Gamma-glutamyl phosphate reductase (421 aa).

The protein belongs to the gamma-glutamyl phosphate reductase family.

Its subcellular location is the cytoplasm. It carries out the reaction L-glutamate 5-semialdehyde + phosphate + NADP(+) = L-glutamyl 5-phosphate + NADPH + H(+). The protein operates within amino-acid biosynthesis; L-proline biosynthesis; L-glutamate 5-semialdehyde from L-glutamate: step 2/2. Its function is as follows. Catalyzes the NADPH-dependent reduction of L-glutamate 5-phosphate into L-glutamate 5-semialdehyde and phosphate. The product spontaneously undergoes cyclization to form 1-pyrroline-5-carboxylate. The chain is Gamma-glutamyl phosphate reductase from Roseobacter denitrificans (strain ATCC 33942 / OCh 114) (Erythrobacter sp. (strain OCh 114)).